The sequence spans 343 residues: Heat-inducible transcription repressor HrcA (343 aa).

Belongs to the HrcA family.

Negative regulator of class I heat shock genes (grpE-dnaK-dnaJ and groELS operons). Prevents heat-shock induction of these operons. The protein is Heat-inducible transcription repressor HrcA of Leptospira biflexa serovar Patoc (strain Patoc 1 / Ames).